Reading from the N-terminus, the 558-residue chain is Potassium-transporting ATPase potassium-binding subunit 2 (558 aa).

12 consecutive transmembrane segments (helical) span residues 1–21 (MSIV…SRYL), 60–80 (IKHF…LLLI), 129–149 (VITF…IAML), 169–189 (FIVR…ISQG), 246–266 (WSNY…VFLF), 281–301 (IMIF…CLYF), 326–346 (FGIG…TGTV), 353–373 (LTPL…VFGG), 376–396 (VGLM…SLMI), 415–435 (IALS…LAFI), 485–505 (IVML…VSSL), and 523–543 (LFFS…TFLP).

The protein belongs to the KdpA family. As to quaternary structure, the system is composed of three essential subunits: KdpA, KdpB and KdpC.

The protein resides in the cell membrane. In terms of biological role, part of the high-affinity ATP-driven potassium transport (or Kdp) system, which catalyzes the hydrolysis of ATP coupled with the electrogenic transport of potassium into the cytoplasm. This subunit binds the extracellular potassium ions and delivers the ions to the membrane domain of KdpB through an intramembrane tunnel. The chain is Potassium-transporting ATPase potassium-binding subunit 2 from Staphylococcus aureus (strain Mu50 / ATCC 700699).